Reading from the N-terminus, the 337-residue chain is GTPase Obg (337 aa).

Residues 1–161 enclose the Obg domain; it reads MNLTDNAVIF…FKIKLDFVFL (161 aa). Positions 162–333 constitute an OBG-type G domain; the sequence is ADVGLFGYSN…LINKILLFLE (172 aa). Residues 168-175, 193-197, 214-217, 282-285, and 314-316 each bind GTP; these read GYSNTGRS, FTTLF, DIPS, NKTD, and SLN. Residues serine 175 and threonine 195 each coordinate Mg(2+).

It belongs to the TRAFAC class OBG-HflX-like GTPase superfamily. OBG GTPase family. In terms of assembly, monomer. Requires Mg(2+) as cofactor.

The protein resides in the cytoplasm. An essential GTPase which binds GTP, GDP and possibly (p)ppGpp with moderate affinity, with high nucleotide exchange rates and a fairly low GTP hydrolysis rate. Plays a role in control of the cell cycle, stress response, ribosome biogenesis and in those bacteria that undergo differentiation, in morphogenesis control. The protein is GTPase Obg of Wigglesworthia glossinidia brevipalpis.